A 311-amino-acid chain; its full sequence is Dehydrogenase/reductase SDR family member 7C (311 aa).

An N-terminal signal peptide occupies residues 1-18 (MGLMAVLMLPLLLLGISG). Residues S47, L49, Y191, K195, and S226 each contribute to the NAD(+) site. Residue Y191 is the Proton acceptor of the active site.

It belongs to the short-chain dehydrogenases/reductases (SDR) family. In terms of tissue distribution, expressed in skeletal muscle and cardiac muscle. Also expressed in liver, kidney, adipocytes and skin.

It is found in the sarcoplasmic reticulum membrane. The enzyme catalyses all-trans-retinol + NAD(+) = all-trans-retinal + NADH + H(+). In terms of biological role, NADH-dependent oxidoreductase which catalyzes the oxidation of all-trans-retinol to all-trans-retinal. Plays a role in the regulation of cardiac and skeletal muscle metabolic functions. Maintains Ca(2+) intracellular homeostasis by repressing Ca(2+) release from the sarcoplasmic reticulum (SR) in myotubes, possibly through local alternations in NAD/NADH or retinol/retinal. Also plays a role in Ca(2+) homeostasis by controlling Ca(2+) overload in the cytosol and the SR in myotubes. Involved in glucose uptake into skeletal muscles and muscle performance by activating PI3K and mTORC2-mediated AKT1 phosphorylation signaling pathways, possibly through the action of its downstream catalytic product all-trans-retinoic acid. This Mus musculus (Mouse) protein is Dehydrogenase/reductase SDR family member 7C.